A 310-amino-acid chain; its full sequence is Transcription initiation factor TFIID subunit 8 (310 aa).

Positions 1–30 (MADAAATAGAGGSGTRSGSKQSTNPADNYH) are disordered. Alanine 2 carries the N-acetylalanine modification. The Histone-fold; involved in forming hexamer structure in TFIID complex domain occupies 35 to 102 (RTLQVVVSSL…IVVTLVEMGF (68 aa)). Position 130 is a phosphothreonine (threonine 130). The interval 262–310 (DSGAEKENTSVLQQNPSLSGSRNGEENIIDNPYLRPVKKPKIRRKKSLS) is disordered. Positions 270–283 (TSVLQQNPSLSGSR) are enriched in polar residues. Serine 271 is modified (phosphoserine). Positions 294-307 (YLRPVKKPKIRRKK) match the Nuclear localization signal motif. The span at 297–310 (PVKKPKIRRKKSLS) shows a compositional bias: basic residues.

The protein belongs to the TAF8 family. In terms of assembly, component of the TFIID basal transcription factor complex, composed of TATA-box-binding protein TBP, and a number of TBP-associated factors (TAFs), including TAF1, TAF2, TAF3, TAF4, TAF5, TAF6, TAF7, TAF8, TAF9, TAF10, TAF11, TAF12 and TAF13. Interacts with TBP, TAF1, TAF6, TAF10, TAF11 and TAF13. Component also of a small TAF complex (SMAT) containing TAF8, TAF10 and SUPT7L. Forms a heterodimer with TAF10. Interaction with TAF10 is mediated mainly via its histone fold domain while interaction with SUPT7L is via its C-terminal region.

The protein localises to the nucleus. It localises to the cytoplasm. Functionally, the TFIID basal transcription factor complex plays a major role in the initiation of RNA polymerase II (Pol II)-dependent transcription. TFIID recognizes and binds promoters with or without a TATA box via its subunit TBP, a TATA-box-binding protein, and promotes assembly of the pre-initiation complex (PIC). The TFIID complex consists of TBP and TBP-associated factors (TAFs), including TAF1, TAF2, TAF3, TAF4, TAF5, TAF6, TAF7, TAF8, TAF9, TAF10, TAF11, TAF12 and TAF13. The TFIID complex structure can be divided into 3 modules TFIID-A, TFIID-B, and TFIID-C. TAF8 is involved in forming the TFIID-B module, together with TAF5. Mediates both basal and activator-dependent transcription. Plays a role in the differentiation of preadipocyte fibroblasts to adipocytes, however, does not seem to play a role in differentiation of myoblasts. Required for the integration of TAF10 in the TAF complex. May be important for survival of cells of the inner cell mass which constitute the pluripotent cell population of the early embryo. This Homo sapiens (Human) protein is Transcription initiation factor TFIID subunit 8 (TAF8).